A 153-amino-acid chain; its full sequence is Large ribosomal subunit protein uL15 (153 aa).

The segment at 21–41 is disordered; the sequence is RGIGSGKGKTGGRGIKGQKSR. The segment covering 23-35 has biased composition (gly residues); that stretch reads IGSGKGKTGGRGI.

Belongs to the universal ribosomal protein uL15 family. Part of the 50S ribosomal subunit.

In terms of biological role, binds to the 23S rRNA. The sequence is that of Large ribosomal subunit protein uL15 from Rickettsia africae (strain ESF-5).